The sequence spans 370 residues: Phospho-N-acetylmuramoyl-pentapeptide-transferase (370 aa).

The next 10 membrane-spanning stretches (helical) occupy residues L31–L51, T73–L93, I98–M118, L135–I155, G177–S197, G209–S229, V251–A271, V273–L293, I298–V318, and K347–L367.

This sequence belongs to the glycosyltransferase 4 family. MraY subfamily. Mg(2+) serves as cofactor.

The protein resides in the cell inner membrane. The enzyme catalyses UDP-N-acetyl-alpha-D-muramoyl-L-alanyl-gamma-D-glutamyl-meso-2,6-diaminopimeloyl-D-alanyl-D-alanine + di-trans,octa-cis-undecaprenyl phosphate = di-trans,octa-cis-undecaprenyl diphospho-N-acetyl-alpha-D-muramoyl-L-alanyl-D-glutamyl-meso-2,6-diaminopimeloyl-D-alanyl-D-alanine + UMP. Its pathway is cell wall biogenesis; peptidoglycan biosynthesis. Catalyzes the initial step of the lipid cycle reactions in the biosynthesis of the cell wall peptidoglycan: transfers peptidoglycan precursor phospho-MurNAc-pentapeptide from UDP-MurNAc-pentapeptide onto the lipid carrier undecaprenyl phosphate, yielding undecaprenyl-pyrophosphoryl-MurNAc-pentapeptide, known as lipid I. This chain is Phospho-N-acetylmuramoyl-pentapeptide-transferase, found in Leptospira borgpetersenii serovar Hardjo-bovis (strain JB197).